The chain runs to 530 residues: NADH-quinone oxidoreductase subunit C/D (530 aa).

Residues 1–144 are NADH dehydrogenase I subunit C; the sequence is MQEIQFIVPA…NPLCMANEET (144 aa). An NADH dehydrogenase I subunit D region spans residues 171 to 530; it reads EYVVNIGPQH…LDYVVPDIDR (360 aa).

The protein in the N-terminal section; belongs to the complex I 30 kDa subunit family. In the C-terminal section; belongs to the complex I 49 kDa subunit family. As to quaternary structure, NDH-1 is composed of 13 different subunits. Subunits NuoB, CD, E, F, and G constitute the peripheral sector of the complex.

It is found in the cell inner membrane. The catalysed reaction is a quinone + NADH + 5 H(+)(in) = a quinol + NAD(+) + 4 H(+)(out). Functionally, NDH-1 shuttles electrons from NADH, via FMN and iron-sulfur (Fe-S) centers, to quinones in the respiratory chain. The immediate electron acceptor for the enzyme in this species is believed to be a menaquinone. Couples the redox reaction to proton translocation (for every two electrons transferred, four hydrogen ions are translocated across the cytoplasmic membrane), and thus conserves the redox energy in a proton gradient. The chain is NADH-quinone oxidoreductase subunit C/D from Bacteroides thetaiotaomicron (strain ATCC 29148 / DSM 2079 / JCM 5827 / CCUG 10774 / NCTC 10582 / VPI-5482 / E50).